Consider the following 46-residue polypeptide: Myoregulin (46 aa).

The Cytoplasmic portion of the chain corresponds to 1–21; that stretch reads MSGKSWVLISTTSPQSLEDEI. Residues 22–42 form a helical membrane-spanning segment; the sequence is LGRLLKILFVLFVDLMSIMYV. At 43–46 the chain is on the lumenal side; it reads VITS.

As to quaternary structure, homooligomer. Monomer. Interacts with ATP2A1/SERCA1. Interacts as a monomer with ATP2A2/SERCA2; the interaction inhibits ATP2A2 activity. Specifically expressed in all skeletal muscles. Detected in both fast- and slow-type skeletal muscle. Not expressed in cardiac or smooth muscles.

It is found in the sarcoplasmic reticulum membrane. In terms of biological role, inhibits the activity of ATP2A1/SERCA1 ATPase in sarcoplasmic reticulum by decreasing the apparent affinity of the ATPase for Ca(2+), thereby acting as a key regulator of skeletal muscle activity. Its high expression in adult skeletal muscle, suggests that it constitutes the predominant regulator of ATP2A1/SERCA1 in adult skeletal muscle. Also inhibits the activity of ATP2A2/SERCA2 and ATP2A3/SERCA3. The protein is Myoregulin of Mus musculus (Mouse).